A 349-amino-acid polypeptide reads, in one-letter code: Mannonate dehydratase (349 aa).

Belongs to the mannonate dehydratase family. The cofactor is Fe(2+). Requires Mn(2+) as cofactor.

The enzyme catalyses D-mannonate = 2-dehydro-3-deoxy-D-gluconate + H2O. It participates in carbohydrate metabolism; pentose and glucuronate interconversion. In terms of biological role, catalyzes the dehydration of D-mannonate. The chain is Mannonate dehydratase from Oceanobacillus iheyensis (strain DSM 14371 / CIP 107618 / JCM 11309 / KCTC 3954 / HTE831).